A 345-amino-acid chain; its full sequence is MKETAAAKFERQHMDSPDLGTDDDDKMSPATSPFLATPRTAGIVGCPFSGGQPKAGVHSGPLQLIESGLLNDIENLGWTVDFAGADALAVSIVSDTPDPDIGRLKQPRLVSRVTKDVADRVYAHASKGQLTVTLGGDHSLAMGTVSGTFKAYPEACLIWVDAHADINTPHTTESGRLHGCPVSFLLGLDGTSSEEIPEFSWIKPCLKPERIVYIGLRDIDAGERKILKDNNIKCFSMFHVDKYGIGKVVEMALDHVNPDRTRPIHLSFDVDALDPSVAPSTGTAVRGGLTFREGHYICEAIAETNLLVSLDIMEINPSLGALASVAQTVDVGRSLVRCALGETLL.

Over residues 1–16 (MKETAAAKFERQHMDS) the composition is skewed to basic and acidic residues. Positions 1 to 34 (MKETAAAKFERQHMDSPDLGTDDDDKMSPATSPF) are disordered. Mn(2+) contacts are provided by I101, H124, S126, G128, I232, and C234.

This sequence belongs to the arginase family. As to quaternary structure, homotrimer. Requires Mn(2+) as cofactor.

It carries out the reaction L-arginine + H2O = urea + L-ornithine. Its pathway is nitrogen metabolism; urea cycle; L-ornithine and urea from L-arginine: step 1/1. Its activity is regulated as follows. The enzyme activity is increased in the range of 20-50% upon the addition of Mn(2+) (1 mM), Co(2+) (1 mM), Ni(2+) (1 and 5 mM) and K(+) (5 mM). In contrast, the addition of Cu(2+), Zn(2+), Ca(2+), Mg(2+), Fe(2+) (both 1 and 5 mM), and Co(2+) (5 mM) strongly suppresses the arginase activity. SDS (1%) and EDTA (1 mM) are the most potent inhibitors. Reducing agents DTT (1 mM), PMSF (1 mM) and beta-mercaptoethanol (1 mM) also significantly inhibit activity by 85%, 64% and 35%, respectively. Surfactants Triton X-100 (1%), Tween-80 (1%) and Tween-20 (1%) are more tolerant, showing a slight decrease of arginase activity in the range of 10-30%. Functionally, cold-active L-arginase that catalyzes the hydrolysis of L-arginine to L-ornithine and urea, an essential reaction in the urea cycle for toxic ammonia removal and cell proliferation. Is not able to use D-arginine or L-canavanine as substrates. This Glaciozyma antarctica (strain PI12) (Antarctic psychrophilic yeast) protein is Arginase.